Here is a 326-residue protein sequence, read N- to C-terminus: MYQDYPGNFDTSSRGSSGSPAHAESYSSGGGGQQKFRVDMPGSGSAFIPTINAITTSQDLQWMVQPTVITSMSNPYPRSHPYSPLPGLASVPGHMALPRPGVIKTIGTTVGRRRRDEQLSPEEEEKRRIRRERNKLAAAKCRNRRRELTEKLQAETEELEEEKSGLQKEIAELQKEKEKLEFMLVAHGPVCKISPEERRSPPTSGLQSLRGTGSAVGPVVVKQEPPEEDSPSSSAGMDKTQRSVIKPISIAGGGFYGEEPLHTPIVVTSTPAITPGTSNLVFTYPSVLEQESPASPSESCSKAHRRSSSSGDQSSDSLNSPTLLAL.

The residue at position 1 (methionine 1) is an N-acetylmethionine. The segment at 1-39 is disordered; sequence MYQDYPGNFDTSSRGSSGSPAHAESYSSGGGGQQKFRVD. Over residues 9 to 19 the composition is skewed to polar residues; that stretch reads FDTSSRGSSGS. Residue lysine 35 forms a Glycyl lysine isopeptide (Lys-Gly) (interchain with G-Cter in SUMO2) linkage. Position 104 is an N6-acetyllysine; alternate (lysine 104). Lysine 104 is covalently cross-linked (Glycyl lysine isopeptide (Lys-Gly) (interchain with G-Cter in SUMO2); alternate). Disordered regions lie at residues 111–131, 193–244, and 289–326; these read GRRRRDEQLSPEEEEKRRIRR, ISPE…QRSV, and EQESPASPSESCSKAHRRSSSSGDQSSDSLNSPTLLAL. Serine 120 carries the post-translational modification Phosphoserine. A bZIP domain is found at 124–187; sequence EEKRRIRRER…EKLEFMLVAH (64 aa). Residues 126–128 form a basic motif region; that stretch reads KRR. The interval 129–136 is leucine-zipper; sequence IRRERNKL. Serine 200 carries the post-translational modification Phosphoserine. Over residues 201 to 211 the composition is skewed to polar residues; sequence PPTSGLQSLRG. Residue lysine 222 forms a Glycyl lysine isopeptide (Lys-Gly) (interchain with G-Cter in SUMO2); alternate linkage. Lysine 222 is covalently cross-linked (Glycyl lysine isopeptide (Lys-Gly) (interchain with G-Cter in SUMO1); alternate). Serine 230 is subject to Phosphoserine. Lysine 239 is covalently cross-linked (Glycyl lysine isopeptide (Lys-Gly) (interchain with G-Cter in SUMO2)). A phosphoserine mark is found at serine 308 and serine 320. Residues 308 to 320 show a composition bias toward low complexity; it reads SSSGDQSSDSLNS.

It belongs to the bZIP family. Fos subfamily. As to quaternary structure, heterodimer. Interacts with the BAF multiprotein chromatin-remodeling complex subunits SMARCB1 and SMARCD1. Interacts with ARID1A and JUN. As to expression, expressed in the brain cortex. Expressed at night in pineal gland (at protein level). Also expressed in osteoblasts (at protein level).

It is found in the nucleus. Controls osteoclast survival and size. As a dimer with JUN, activates LIF transcription. Activates CEBPB transcription in PGE2-activated osteoblasts. This Rattus norvegicus (Rat) protein is Fos-related antigen 2 (Fosl2).